We begin with the raw amino-acid sequence, 473 residues long: TOX high mobility group box family member 2 (473 aa).

Disordered stretches follow at residues 1–42, 139–211, 277–302, and 340–473; these read MSDG…SLLH, GLRS…VSAY, SKSP…PPKQ, and LLPG…PSAR. Residues 8–20 are compositionally biased toward polar residues; it reads LLSTSQTYNSQGE. Positions 25–63 are required for transcriptional activation; that stretch reads YEIPPITPPNLPEPSLLHLGDHEAGYHSLCHGLAPNGLL. The segment covering 153 to 164 has biased composition (low complexity); sequence GSKSATPSPSSS. The segment covering 171–188 has biased composition (basic and acidic residues); sequence DAHFKISGEKRPSTDPGK. A Nuclear localization signal motif is present at residues 172–201; the sequence is AHFKISGEKRPSTDPGKKAKNPKKKKKKDP. The segment covering 189–199 has biased composition (basic residues); sequence KAKNPKKKKKK. Residues 204–272 constitute a DNA-binding region (HMG box); it reads PQKPVSAYAL…EYLKALAAYR (69 aa). 2 stretches are compositionally biased toward low complexity: residues 373–382 and 415–440; these read LLSPPLSMSP and SDFP…WDGS. The span at 463-473 shows a compositional bias: polar residues; sequence SPKNLQEPSAR.

As to expression, highly expressed in ovary, where it is restricted to undifferentiated granulosa cells. Expressed in hypothalamus, pituitary gland, testis and uterus.

The protein resides in the nucleus. Its function is as follows. Putative transcriptional activator involved in the hypothalamo-pituitary-gonadal system. The polypeptide is TOX high mobility group box family member 2 (Tox2) (Rattus norvegicus (Rat)).